We begin with the raw amino-acid sequence, 31 residues long: Large ribosomal subunit protein bL21 (31 aa).

The protein belongs to the bacterial ribosomal protein bL21 family. In terms of assembly, part of the 50S ribosomal subunit. Contacts protein L20.

Functionally, this protein binds to 23S rRNA in the presence of protein L20. This is Large ribosomal subunit protein bL21 (rplU) from Streptococcus thermophilus.